The primary structure comprises 272 residues: MTKPTPNEIGKGYDAFADLLDQLWGENLHHGYWDDESATLEEATTRLTDRLAGMLPLRAGDRLLDIGCGNGEPAIRMATANDVMVTGISISEKQVERANDRAYKADVDDRVVFEYADAMELPYPDASFDVVWALESLHHMPDRWHVIRQAARVLRPGGRLALGDFLLVPSPAGLEADAERVREVGKGVVAVVSLDEYQAHLREAGLEPESAEDVSQYTRPSWTKAAERFEGLREQALQHIEAAQFEVTLGRFRAFSEEPSLGYVLLTARKPD.

Residues serine 89, glutamine 94, 117 to 118 (DA), leucine 134, and histidine 139 contribute to the S-adenosyl-L-methionine site.

The protein belongs to the class I-like SAM-binding methyltransferase superfamily. As to quaternary structure, exists probably as a trimer.

The enzyme catalyses 27-O-demethylrifamycin SV + S-adenosyl-L-methionine = rifamycin SV + S-adenosyl-L-homocysteine + H(+). The protein operates within antibiotic biosynthesis; rifamycin B biosynthesis. With respect to regulation, slightly inhibited by Ca(2+) and Mg(2+). Strongly inhibited by Zn(2+), Ni(2+) and Co(2+). Catalyzes the methylation of 27-O-demethylrifamycin SV (DMRSV) to rifamycin SV. This Amycolatopsis mediterranei (strain S699) (Nocardia mediterranei) protein is 27-O-demethylrifamycin SV methyltransferase.